The following is a 91-amino-acid chain: Large ribosomal subunit protein bL31B-1 (91 aa).

It belongs to the bacterial ribosomal protein bL31 family. Type B subfamily. As to quaternary structure, part of the 50S ribosomal subunit.

This is Large ribosomal subunit protein bL31B-1 from Streptomyces avermitilis (strain ATCC 31267 / DSM 46492 / JCM 5070 / NBRC 14893 / NCIMB 12804 / NRRL 8165 / MA-4680).